We begin with the raw amino-acid sequence, 284 residues long: Aminoglycoside 6-adenylyltransferase (284 aa).

As to quaternary structure, homodimer.

Its subcellular location is the cytoplasm. It catalyses the reaction streptomycin + ATP = 6-O-adenylylstreptomycin + diphosphate. The catalysed reaction is streptomycin + GTP = 6-O-guanylylstreptomycin + diphosphate. The enzyme catalyses streptidine + ATP = 6-O-adenylylstreptidine + diphosphate. In terms of biological role, mediates bacterial resistance to streptomycin. Adenylates streptomycin on the O-6 residue. Adenylates streptidine on the O-6 residue. Does not act on spectinomycin, neomycin-B or kanamycin. Specific for ATP and GTP nucleotides incorporating a purine ring. No reaction with CTP or UTP. This chain is Aminoglycoside 6-adenylyltransferase, found in Bacillus subtilis (strain 168).